A 211-amino-acid polypeptide reads, in one-letter code: Probable chemoreceptor glutamine deamidase CheD (211 aa).

It belongs to the CheD family.

The catalysed reaction is L-glutaminyl-[protein] + H2O = L-glutamyl-[protein] + NH4(+). Functionally, probably deamidates glutamine residues to glutamate on methyl-accepting chemotaxis receptors (MCPs), playing an important role in chemotaxis. The protein is Probable chemoreceptor glutamine deamidase CheD of Hahella chejuensis (strain KCTC 2396).